A 61-amino-acid polypeptide reads, in one-letter code: Small ribosomal subunit protein uS14B (61 aa).

Residues Cys-24, Cys-27, Cys-40, and Cys-43 each coordinate Zn(2+).

This sequence belongs to the universal ribosomal protein uS14 family. Zinc-binding uS14 subfamily. Part of the 30S ribosomal subunit. Contacts proteins S3 and S10. Zn(2+) serves as cofactor.

Functionally, binds 16S rRNA, required for the assembly of 30S particles and may also be responsible for determining the conformation of the 16S rRNA at the A site. The sequence is that of Small ribosomal subunit protein uS14B from Streptococcus agalactiae serotype Ia (strain ATCC 27591 / A909 / CDC SS700).